A 469-amino-acid polypeptide reads, in one-letter code: Interstitial collagenase (469 aa).

The N-terminal stretch at 1 to 18 (MPRLPLLLLLLWGTGSHG) is a signal peptide. The propeptide at 19–99 (FPAATSETQE…PRCGVPDVAP (81 aa)) is activation peptide. Positions 90–97 (PRCGVPDV) match the Cysteine switch motif. Position 92 (cysteine 92) interacts with Zn(2+). The N-linked (GlcNAc...) asparagine glycan is linked to asparagine 120. Residues aspartate 124 and aspartate 158 each contribute to the Ca(2+) site. Zn(2+) is bound by residues histidine 168 and aspartate 170. Ca(2+) is bound by residues aspartate 175, glycine 176, glycine 178, and asparagine 180. Histidine 183 provides a ligand contact to Zn(2+). Residues glycine 190, glycine 192, and aspartate 194 each contribute to the Ca(2+) site. Histidine 196 provides a ligand contact to Zn(2+). Positions 198, 199, and 201 each coordinate Ca(2+). Zn(2+) is bound at residue histidine 218. Glutamate 219 is an active-site residue. 2 residues coordinate Zn(2+): histidine 222 and histidine 228. Threonine 274 bears the Phosphothreonine mark. Hemopexin repeat units follow at residues 275 to 324 (PEVC…WPQL), 325 to 371 (PNGL…FGFP), 374 to 422 (VKSI…FPGI), and 423 to 466 (GNKV…WFNC). Cysteine 278 and cysteine 466 are disulfide-bonded. Residues aspartate 285 and glutamine 329 each coordinate Ca(2+). Residue tyrosine 360 is modified to Phosphotyrosine; by PKDCC. Ca(2+)-binding residues include aspartate 378 and aspartate 427.

This sequence belongs to the peptidase M10A family. The cofactor is Ca(2+). Zn(2+) is required as a cofactor. In terms of processing, tyrosine phosphorylated in platelets by PKDCC/VLK.

Its subcellular location is the secreted. The protein localises to the extracellular space. The protein resides in the extracellular matrix. It catalyses the reaction Cleavage of the triple helix of collagen at about three-quarters of the length of the molecule from the N-terminus, at 775-Gly-|-Ile-776 in the alpha1(I) chain. Cleaves synthetic substrates and alpha-macroglobulins at bonds where P1' is a hydrophobic residue.. Can be activated without removal of the activation peptide. In terms of biological role, cleaves collagens of types I, II, and III at one site in the helical domain. Also cleaves collagens of types VII and X. This chain is Interstitial collagenase (MMP1), found in Bos taurus (Bovine).